The primary structure comprises 203 residues: Sarcosine oxidase subunit gamma (203 aa).

Belongs to the SoxG family. Heterotetramer composed of subunits alpha (SoxA), beta (SoxB), gamma (SoxG) and delta (SoxD).

It is found in the cytoplasm. It carries out the reaction sarcosine + (6S)-5,6,7,8-tetrahydrofolate + O2 = (6R)-5,10-methylene-5,6,7,8-tetrahydrofolate + glycine + H2O2. The catalysed reaction is sarcosine + O2 + H2O = formaldehyde + glycine + H2O2. In the presence of tetrahydrofolate, catalyzes the oxidative demethylation of sarcosine to yield glycine, 5,10-methylenetetrahydrofolate and hydrogen peroxide. In the absence of tetrahydrofolate, catalyzes the oxidative demethylation of sarcosine to yield glycine, formaldehyde and hydrogen peroxide. The chain is Sarcosine oxidase subunit gamma from Corynebacterium sp. (strain P-1).